Consider the following 299-residue polypeptide: tRNA pseudouridine synthase A (299 aa).

Asp67 (nucleophile) is an active-site residue. Tyr125 lines the substrate pocket.

Belongs to the tRNA pseudouridine synthase TruA family. As to quaternary structure, homodimer.

It carries out the reaction uridine(38/39/40) in tRNA = pseudouridine(38/39/40) in tRNA. In terms of biological role, formation of pseudouridine at positions 38, 39 and 40 in the anticodon stem and loop of transfer RNAs. The protein is tRNA pseudouridine synthase A of Parasynechococcus marenigrum (strain WH8102).